The sequence spans 489 residues: Mitochondrial-processing peptidase subunit beta (489 aa).

The transit peptide at 1–45 (MAAAALSRTLLPEARRRLWGFTRRLPLRRAAAQPLYFGGDRLRST) directs the protein to the mitochondrion. A Zn(2+)-binding site is contributed by H101. Catalysis depends on E104, which acts as the Proton acceptor. Positions 105 and 181 each coordinate Zn(2+).

Belongs to the peptidase M16 family. In terms of assembly, heterodimer of PMPCA (alpha) and PMPCB (beta) subunits, forming the mitochondrial processing protease (MPP) in which PMPCA is involved in substrate recognition and binding and PMPCB is the catalytic subunit. Zn(2+) is required as a cofactor.

It is found in the mitochondrion matrix. The catalysed reaction is Release of N-terminal transit peptides from precursor proteins imported into the mitochondrion, typically with Arg in position P2.. Binding to PMPCA is required for catalytic activity. Catalytic subunit of the essential mitochondrial processing protease (MPP), which cleaves the mitochondrial sequence off newly imported precursors proteins. Preferentially, cleaves after an arginine at position P2. Required for PINK1 turnover by coupling PINK1 mitochondrial import and cleavage, which results in subsequent PINK1 proteolysis. The chain is Mitochondrial-processing peptidase subunit beta (Pmpcb) from Mus musculus (Mouse).